The primary structure comprises 238 residues: MGKVYLVGAGPGDPDLITLKGLKAIQQADVILYDRLVNKDLLEYAKSDADIIYCGKLPNYHTLKQETINNFLVKFAKKGKIVTRLKGGDPFVFGRGGEEAEALVQQGISFEIVPGITSGIAAAAYAGIPVTHREYSASFAFVAGHRKDSKHDAIKWDSLAKGVDTLAIYMGVRNLPYICQQLMKHGKTSATPIALIHWGTCADQRTVTGTLGTIVDIVKEEQIENPSMIIVGEVVNFS.

Residues Pro-11, 87–89 (GGD), 117–118 (TS), and Met-170 each bind S-adenosyl-L-homocysteine.

This sequence belongs to the precorrin methyltransferase family. Monomer.

The enzyme catalyses uroporphyrinogen III + 2 S-adenosyl-L-methionine = precorrin-2 + 2 S-adenosyl-L-homocysteine + H(+). Its pathway is cofactor biosynthesis; adenosylcobalamin biosynthesis; precorrin-2 from uroporphyrinogen III: step 1/1. It participates in porphyrin-containing compound metabolism; siroheme biosynthesis; precorrin-2 from uroporphyrinogen III: step 1/1. Its activity is regulated as follows. SUMT exhibits a substrate inhibition phenomenon at uroporphyrinogen III concentrations above 0.5 uM; this property might play a regulatory role in cobalamin biosynthesis. Catalyzes the two successive C-2 and C-7 methylation reactions involved in the conversion of uroporphyrinogen III to precorrin-2 via the intermediate formation of precorrin-1. It is a step in the biosynthesis of both cobalamin (vitamin B12) and siroheme. The polypeptide is Uroporphyrinogen-III C-methyltransferase (Priestia megaterium (Bacillus megaterium)).